A 350-amino-acid polypeptide reads, in one-letter code: Phenylalanine--tRNA ligase alpha subunit (350 aa).

E260 contributes to the Mg(2+) binding site.

The protein belongs to the class-II aminoacyl-tRNA synthetase family. Phe-tRNA synthetase alpha subunit type 1 subfamily. Tetramer of two alpha and two beta subunits. Mg(2+) is required as a cofactor.

Its subcellular location is the cytoplasm. The enzyme catalyses tRNA(Phe) + L-phenylalanine + ATP = L-phenylalanyl-tRNA(Phe) + AMP + diphosphate + H(+). The protein is Phenylalanine--tRNA ligase alpha subunit of Mycoplasma capricolum subsp. capricolum (strain California kid / ATCC 27343 / NCTC 10154).